Here is a 1840-residue protein sequence, read N- to C-terminus: Collagen alpha-1(V) chain (1840 aa).

Residues 1–36 (MDVHTRWKDRLPVGPAAVPPLLLLLLLLWAPPQSRA) form the signal peptide. A Laminin G-like domain is found at 72 to 244 (DVAYRVSKDA…DYCEHYSPDC (173 aa)). Residues 231–445 (RAAYDYCEHY…MPANQDTIYE (215 aa)) are nonhelical region. A sulfotyrosine mark is found at tyrosine 234, tyrosine 236, tyrosine 240, tyrosine 262, tyrosine 263, and tyrosine 271. 3 disordered regions span residues 242–523 (PDCD…TMLM), 528–547 (FGGGGDAGSKGPMVSAQESQ), and 561–1576 (GPAG…EVIQ). A compositionally biased stretch (acidic residues) spans 258 to 268 (NPDEYYPEGDG). Low complexity-rich tracts occupy residues 335 to 352 (DYDYVPTDDYYTPAPYED) and 376 to 386 (TSTIITSNTSN). Residues 446–560 (GIGGPRGEKG…ILQQARLALR (115 aa)) form an interrupted collagenous region region. Positions 472–487 (PPGPEGPAGLPGPPGT) are enriched in pro residues. Positions 508–523 (LPGADGLPGPPGTMLM) are enriched in low complexity. The span at 561–572 (GPAGPMGLTGRP) shows a compositional bias: low complexity. Positions 561–1572 (GPAGPMGLTG…GLPGPPGPPG (1012 aa)) are triple-helical region. Residues proline 572, proline 578, and proline 623 each carry the 4-hydroxyproline modification. Lysine 629 is modified (5-hydroxylysine). At proline 641 the chain carries 4-hydroxyproline. Lysine 644 is modified (5-hydroxylysine). 4-hydroxyproline is present on residues proline 650, proline 656, proline 659, proline 677, and proline 680. Low complexity predominate over residues 673 to 688 (PRGLPGEPGPRGLLGP). 3-hydroxyproline occurs at positions 682 and 688. The segment covering 689-698 (KGPPGPPGPP) has biased composition (pro residues). 4-hydroxyproline is present on residues proline 692, proline 698, and proline 707. The residue at position 710 (lysine 710) is a 5-hydroxylysine. 4-hydroxyproline is present on residues proline 719, proline 722, proline 728, and proline 734. Low complexity predominate over residues 724-743 (QQGNPGAQGLPGPQGAIGPP). Lysine 746 bears the 5-hydroxylysine mark. Positions 749–758 (LGKPGLPGMP) are enriched in low complexity. Residues proline 752, proline 758, proline 764, proline 767, and proline 773 each carry the 4-hydroxyproline modification. At lysine 776 the chain carries 5-hydroxylysine. 4-hydroxyproline occurs at positions 782 and 791. 4 positions are modified to 5-hydroxylysine: lysine 797, lysine 806, lysine 809, and lysine 812. A 4-hydroxyproline modification is found at proline 818. Lysine 821 carries the 5-hydroxylysine modification. A 4-hydroxyproline modification is found at proline 836. Residues 839–848 (RGEDGPEGPK) show a composition bias toward basic and acidic residues. Lysine 848 and lysine 866 each carry 5-hydroxylysine. Proline 872, proline 875, and proline 878 each carry 4-hydroxyproline. Residue lysine 884 is modified to 5-hydroxylysine. 4-hydroxyproline occurs at positions 890 and 893. Residue lysine 899 is modified to 5-hydroxylysine. 4-hydroxyproline is present on residues proline 905 and proline 908. Positions 910–919 (PRGQRGPTGP) are enriched in low complexity. 2 positions are modified to 4-hydroxyproline: proline 932 and proline 947. Low complexity-rich tracts occupy residues 973 to 992 (KDGLPGHPGQRGETGFQGKT) and 1001 to 1013 (VGPQGPTGETGPM). Residues proline 1019, proline 1022, proline 1025, and proline 1031 each carry the 4-hydroxyproline modification. A compositionally biased stretch (low complexity) spans 1090-1106 (SPGERGPAGAAGPIGIP). Residues 1108 to 1117 (RPGPQGPPGP) show a composition bias toward pro residues. 4-hydroxyproline occurs at positions 1223 and 1226. Residues 1261-1270 (PSGAPGADGP) show a composition bias toward low complexity. Over residues 1296-1305 (GLPGEGGPLG) the composition is skewed to gly residues. 2 stretches are compositionally biased toward pro residues: residues 1382 to 1400 (TGEPGPSGPPGKRGPPGPA) and 1456 to 1471 (SPGPDGPPGPMGPPGL). A 4-hydroxyproline mark is found at proline 1469 and proline 1472. The span at 1487–1496 (PGLIGLIGPP) shows a compositional bias: low complexity. Over residues 1528–1543 (PLGPPGPPGLPGPPGP) the composition is skewed to pro residues. The segment covering 1544–1556 (KGAKGSSGPTGPK) has biased composition (low complexity). The interval 1573 to 1607 (EVIQPLPIQASRTRRNIDASQLLDDGAGESYLDYA) is nonhelical region. Tyrosine 1603 and tyrosine 1606 each carry sulfotyrosine. The Fibrillar collagen NC1 domain occupies 1611–1839 (EEIFGSLNSL…GFEVGPACFL (229 aa)).

It belongs to the fibrillar collagen family. As to quaternary structure, trimers of two alpha 1(V) and one alpha 2(V) chains in most tissues and trimers of one alpha 1(V), one alpha 2(V), and one alpha 3(V) chains in placenta. Interacts with CSPG4. Hydroxylation on proline residues within the sequence motif, GXPG, is most likely to be 4-hydroxy as this fits the requirement for 4-hydroxylation in vertebrates. Post-translationally, sulfated on 40% of tyrosines. In terms of tissue distribution, ubiquitously expressed.

The protein resides in the secreted. It localises to the extracellular space. Its subcellular location is the extracellular matrix. In terms of biological role, type V collagen is a member of group I collagen (fibrillar forming collagen). It is a minor connective tissue component of nearly ubiquitous distribution. Type V collagen binds to DNA, heparan sulfate, thrombospondin, heparin, and insulin. This Cricetulus longicaudatus (Long-tailed dwarf hamster) protein is Collagen alpha-1(V) chain (COL5A1).